The sequence spans 229 residues: uncharacterized protein (229 aa).

This is an uncharacterized protein from Mus musculus (Mouse).